The sequence spans 484 residues: MACEGRTMISDTYKVRVNLGLCALAAAITLAGCAGLPDQRLANEALKRGDTALAERNYKALADLGYSEAQVGLADIKVATRDPSQIKEAEATYRAAAATSPRAQARLGRLLVAKPDSTQAEREEAETLLKQAAKQGQSNTLIPLAMLYLSYPQSFPKVNAQQQIDQWRAAGNPEAGLAQVLLYRTQGTYDQHLGEVEKICKAALNTTDICYVELATVYQKRGQADQQAALLGQLKSAYARGAVPATRVDSVARVLADRSLGQTDEKTAKELLEQVAPANPASWVSLAQLVYDFPELGDTDQLMAYIDKGREAEQPRAELLLGRLYYEGKTLPADAQKAEQHLQAAAEAGEISAHYYLGQLYRRGYLGNVEPQKAVDHLLAAARGGQNSADYALAQLFSEGHGIRPQPGNAWVFAQLSQANPTPQSAELLQQLDQQLTPDQRNQAQQLLDQEKRARGSLAQGANSTLALEALQDDEKEVDGEDSL.

An N-terminal signal peptide occupies residues 1 to 32 (MACEGRTMISDTYKVRVNLGLCALAAAITLAG). Cysteine 33 carries N-palmitoyl cysteine lipidation. Cysteine 33 is lipidated: S-diacylglycerol cysteine. Residues 447-484 (LLDQEKRARGSLAQGANSTLALEALQDDEKEVDGEDSL) are disordered. The segment covering 471–484 (LQDDEKEVDGEDSL) has biased composition (acidic residues).

This sequence belongs to the AlgK family.

It is found in the cell outer membrane. It functions in the pathway glycan biosynthesis; alginate biosynthesis. May be involved in the polymerization of mannuronate to alginate. The sequence is that of Alginate biosynthesis protein AlgK (algK) from Pseudomonas putida (strain ATCC 47054 / DSM 6125 / CFBP 8728 / NCIMB 11950 / KT2440).